A 200-amino-acid polypeptide reads, in one-letter code: Recombination protein RecR (200 aa).

The C4-type zinc finger occupies 59 to 74; it reads CDICGNVCETSPCPVC. The Toprim domain maps to 82–177; the sequence is SVICVVEEPK…KVTRLASGLP (96 aa).

This sequence belongs to the RecR family.

May play a role in DNA repair. It seems to be involved in an RecBC-independent recombinational process of DNA repair. It may act with RecF and RecO. This Bifidobacterium adolescentis (strain ATCC 15703 / DSM 20083 / NCTC 11814 / E194a) protein is Recombination protein RecR.